The chain runs to 237 residues: 2-C-methyl-D-erythritol 4-phosphate cytidylyltransferase (237 aa).

Belongs to the IspD/TarI cytidylyltransferase family. IspD subfamily.

It carries out the reaction 2-C-methyl-D-erythritol 4-phosphate + CTP + H(+) = 4-CDP-2-C-methyl-D-erythritol + diphosphate. Its pathway is isoprenoid biosynthesis; isopentenyl diphosphate biosynthesis via DXP pathway; isopentenyl diphosphate from 1-deoxy-D-xylulose 5-phosphate: step 2/6. In terms of biological role, catalyzes the formation of 4-diphosphocytidyl-2-C-methyl-D-erythritol from CTP and 2-C-methyl-D-erythritol 4-phosphate (MEP). In Acaryochloris marina (strain MBIC 11017), this protein is 2-C-methyl-D-erythritol 4-phosphate cytidylyltransferase.